The following is a 64-amino-acid chain: Large ribosomal subunit protein bL32 (64 aa).

Basic residues predominate over residues 1–15; that stretch reads MAVPKRKVSKSRRDS. The segment at 1–21 is disordered; that stretch reads MAVPKRKVSKSRRDSRRAQTF.

This sequence belongs to the bacterial ribosomal protein bL32 family.

This is Large ribosomal subunit protein bL32 from Symbiobacterium thermophilum (strain DSM 24528 / JCM 14929 / IAM 14863 / T).